A 467-amino-acid polypeptide reads, in one-letter code: ATP-dependent protease ATPase subunit HslU (467 aa).

Residues I18, 60–65, D280, E345, and R417 contribute to the ATP site; that span reads GVGKTE.

The protein belongs to the ClpX chaperone family. HslU subfamily. In terms of assembly, a double ring-shaped homohexamer of HslV is capped on each side by a ring-shaped HslU homohexamer. The assembly of the HslU/HslV complex is dependent on binding of ATP.

Its subcellular location is the cytoplasm. Functionally, ATPase subunit of a proteasome-like degradation complex; this subunit has chaperone activity. The binding of ATP and its subsequent hydrolysis by HslU are essential for unfolding of protein substrates subsequently hydrolyzed by HslV. HslU recognizes the N-terminal part of its protein substrates and unfolds these before they are guided to HslV for hydrolysis. This chain is ATP-dependent protease ATPase subunit HslU, found in Lactobacillus helveticus (strain DPC 4571).